The following is a 285-amino-acid chain: Undecaprenyl-diphosphatase (285 aa).

Helical transmembrane passes span 40-60, 92-112, 122-142, 159-179, 197-217, 233-253, and 259-279; these read DELL…LLYF, LCIL…ENFI, SVYA…WADA, FLIG…RSGI, FSML…LLGL, LIVA…LMAL, and FLPF…TSPI.

The protein belongs to the UppP family.

The protein resides in the cell inner membrane. It catalyses the reaction di-trans,octa-cis-undecaprenyl diphosphate + H2O = di-trans,octa-cis-undecaprenyl phosphate + phosphate + H(+). Functionally, catalyzes the dephosphorylation of undecaprenyl diphosphate (UPP). Confers resistance to bacitracin. The sequence is that of Undecaprenyl-diphosphatase from Hyphomonas neptunium (strain ATCC 15444).